The primary structure comprises 631 residues: 30-kDa cleavage and polyadenylation specificity factor 30 (631 aa).

Positions 12–38 (EGGLDSGPVQNTASVPVAPPENSSSAA) are disordered. C3H1-type zinc fingers lie at residues 60-87 (SFRQ…HQFD), 88-112 (KARM…VYKH), and 114-141 (NEDI…HAKL). Positions 179-234 (QDRPQGQVPMQGQPQESGNLQQQQQQQPQQSQHQVSQTLIPNPADQTNRTSHPLPQ) are disordered. A compositionally biased stretch (low complexity) spans 182 to 215 (PQGQVPMQGQPQESGNLQQQQQQQPQQSQHQVSQ). Residues 216–231 (TLIPNPADQTNRTSHP) show a composition bias toward polar residues. Residues 237 to 372 (NRYFVVKSNN…SVGEQLASLL (136 aa)) enclose the YTH domain. Residues 392-407 (EEEKAKGVNPESRAEN) are compositionally biased toward basic and acidic residues. 2 disordered regions span residues 392-447 (EEEK…RGIM) and 541-631 (PHMG…KKRR). Over residues 412–432 (PFEDNEEEEEEEDESEEEEES) the composition is skewed to acidic residues. The segment covering 573 to 583 (KTPERSDERGV) has biased composition (basic and acidic residues). Ser-610 and Ser-612 each carry phosphoserine. Over residues 621-631 (RSRHGEGKKRR) the composition is skewed to basic residues.

Belongs to the CPSF4/YTH1 family. Component of the cleavage and polyadenylation specificity factor (CPSF) complex. Can form homodimers. Binds to calmodulin. Forms a complex with cleavage and polyadenylation specificity factor (CPSF) subunits CPSF73-I, CPSF73-II, CPSF100, CPSF160, CFIS2, FIPS3, FIPS5, PAPS2, PAPS3, CLPS3, PCFS1, PCFS4, CSTF50 and CSTF77. In terms of tissue distribution, expressed in seedlings, roots, leaves, siliques, stems and flowers.

The protein localises to the nucleus. Its subcellular location is the cytoplasm. With respect to regulation, endonuclease activity is repressed by the N-terminal domain of FIPS5. Nuclease activity is inhibited by zinc (&gt;100 uM), cadmium in a progressive manner (50 percent activity at 1 mM Cd(2+)), and high salt levels (e.g. KCl or NaCl &gt;600 mM). Stimulated by ATP in the presence of Zn(2+), even at inhibitory zinc concentrations. Elevated temperatures prevent RNA-binding at 55 degrees Celsius, but endonuclease activity at 70 degrees Celsius. The sulfhydryl reagent dithiothreitol (DTT) inhibits both RNA-binding and nuclease activities. Its function is as follows. Component of the cleavage and polyadenylation specificity factor (CPSF) complex that play a key role in pre-mRNA 3'-end formation. May interact with poly(A) polymerase and other factors to bring about cleavage and poly(A) addition. Mediates poly(A) site selection. Binds RNA in a calcium-dependent manner. Exhibits endonuclease activity with an ability to nick and degrade linear as well as circular single-stranded RNA that leaves RNA 3' ends with hydroxyl groups, thus mediating processing of the pre-mRNA as a prelude to the polyadenylation. Involved in the post-transcriptional control, probably via poly(A) addition, of the responses of plants to stress, especially genes mediating tolerance to oxidative stress. Plays a role in the regulation of salicylic acid (SA) production via the control of messenger RNA 3' end processing, thus being a key component of programmed cell death and plant immune responses required for resistance to virulent Pseudomonas syringae pv tomato DC3000 (Pst). The sequence is that of 30-kDa cleavage and polyadenylation specificity factor 30 from Arabidopsis thaliana (Mouse-ear cress).